Here is a 63-residue protein sequence, read N- to C-terminus: uncharacterized protein (63 aa).

Transmembrane regions (helical) follow at residues 3-23 (VFLI…VYYI) and 42-62 (ALVC…TKLL).

It is found in the cell membrane. This is an uncharacterized protein from Bacillus subtilis (strain 168).